Consider the following 222-residue polypeptide: Collectrin (222 aa).

The N-terminal stretch at 1–14 is a signal peptide; that stretch reads MLWLLFFLVTAIHA. The Extracellular portion of the chain corresponds to 15-141; that stretch reads DLCRPDAENA…LAPPTDPSVP (127 aa). One can recognise a Collectrin-like domain in the interval 21 to 222; it reads AENAFKVRLS…VTEDERLTPL (202 aa). Residues N76 and N93 are each glycosylated (N-linked (GlcNAc...) asparagine). The helical transmembrane segment at 142 to 162 threads the bilayer; it reads IWIIIFGVIFCIVLVATMLLI. Topologically, residues 163 to 222 are cytoplasmic; it reads ISGIRQHRRKNKGPSEMEDSEDKCENVITIENGIPCDPLDMKGGHINDAFVTEDERLTPL. Residues T214 and T220 each carry the phosphothreonine modification.

The protein belongs to the CLTRN family. In terms of assembly, monomer. Homodimer; dimerization prevents CLTRN cleavage by BACE2. Interacts with SLC6A18; this interaction regulates the trafficking of SLC6A18 to the cell membrane and its amino acid transporter activity. Interacts with SLC6A19; this interaction regulates the trafficking of SLC6A19 to the cell membrane and its amino acid transporter activity. Interacts with SNAPIN. Post-translationally, glycosylated. Glycosylation is required for plasma membrane localization and for its cleavage by BACE2. In terms of processing, proteolytically processed in pancreatic beta cells by BACE2 leading to the generation and extracellular release of soluble CLTRN, and a corresponding cell-associated C-terminal fragment which is later cleaved by gamma-secretase. This shedding process inactivates CLTRN. Three cleavage sites have been identified for BACE2, two clustered sites after Phe-116 and Leu-118 and a more membrane proximal site at Phe-125; the preferred BACE2 cleavage site seems to be between Phe-125 and Leu-126, Phe-116 and Leu-118 act as alternative sites.

The protein localises to the cell membrane. Functionally, plays an important role in amino acid transport by acting as binding partner of amino acid transporters SLC6A18 and SLC6A19, regulating their trafficking on the cell surface and their activity. May also play a role in trafficking of amino acid transporters SLC3A1 and SLC7A9 to the renal cortical cell membrane. Regulator of SNARE complex function. Stimulator of beta cell replication. This is Collectrin (CLTRN) from Bos taurus (Bovine).